Here is a 128-residue protein sequence, read N- to C-terminus: Glycoprotein hormone alpha-2 (128 aa).

Positions 1–20 (MPMAPRVLLLCLLGLAVTEG) are cleaved as a signal peptide. 4 cysteine pairs are disulfide-bonded: Cys-30-Cys-88, Cys-47-Cys-102, Cys-56-Cys-118, and Cys-60-Cys-120. Residues Asn-36 and Asn-80 are each glycosylated (N-linked (GlcNAc...) asparagine).

This sequence belongs to the glycoprotein hormones subunit alpha family. As to quaternary structure, heterodimer with GPHB5; this heterodimer interacts with thyroid-stimulating hormone receptor (TSHR), and hence stimulates cAMP production.

It localises to the secreted. In terms of biological role, functions as a heterodimeric glycoprotein hormone with GPHB5 able to bind and activate the thyroid-stimulating hormone receptor (TSHR), leading to increased cAMP production. Plays a central role in controlling thyroid cell metabolism. In Mus musculus (Mouse), this protein is Glycoprotein hormone alpha-2 (Gpha2).